A 263-amino-acid polypeptide reads, in one-letter code: MSEEMLYFSGLSDVLRMTFVQIMIFSTIAIVIFLYGLISNFQKWGTGVTGYALEPQEGKKGSAITFLKTWWSQVTAESHHRGESILEILILDILFQRRILKRSPFRWVMHLFIFGGWMTLFALSGMMFAVEMTEKIGIALPFTPAEFRDFLSIPNYIFGYILLIGVLVALVRRLFVSEVREASIMYDWVLIGIVFLVTISGFIADGIRTGFIWSFGLDPSVAPPAALFHSIFSLLFCIAFIPYSKYIHIIAIPLALLANKGGE.

5 consecutive transmembrane segments (helical) span residues threonine 18–isoleucine 38, valine 108–phenylalanine 128, phenylalanine 150–leucine 170, isoleucine 184–alanine 204, and valine 221–isoleucine 241.

This sequence belongs to the HdrE family. The dihydromethanophenazine:CoB--CoM heterodisulfide reductase is composed of two subunits; HdrD and HdrE. Heme b serves as cofactor.

It localises to the cell membrane. The catalysed reaction is methanophenazine + coenzyme B + coenzyme M = dihydromethanophenazine + coenzyme M-coenzyme B heterodisulfide. It participates in cofactor metabolism; coenzyme M-coenzyme B heterodisulfide reduction; coenzyme B and coenzyme M from coenzyme M-coenzyme B heterodisulfide: step 1/1. Functionally, part of a complex that catalyzes the reversible reduction of CoM-S-S-CoB to the thiol-coenzymes H-S-CoM (coenzyme M) and H-S-CoB (coenzyme B). HdrE may be responsible for anchoring the complex to the membrane. This Methanosarcina barkeri (strain Fusaro / DSM 804) protein is Dihydromethanophenazine:CoB--CoM heterodisulfide reductase subunit E (hdrE).